The chain runs to 430 residues: C4-dicarboxylate transport protein (430 aa).

8 consecutive transmembrane segments (helical) span residues 9 to 29 (VLYV…HFYP), 45 to 65 (LIKM…IAGM), 79 to 99 (LLYF…ATHL), 149 to 169 (GEIL…AHLG), 185 to 205 (VLFG…FGAM), 223 to 243 (LIGT…GAIA), 308 to 328 (IYMT…LTWM), and 356 to 376 (AATL…ILGI).

The protein belongs to the dicarboxylate/amino acid:cation symporter (DAACS) (TC 2.A.23) family.

The protein localises to the cell inner membrane. Functionally, responsible for the transport of dicarboxylates such as succinate, fumarate, and malate from the periplasm across the membrane. This Burkholderia orbicola (strain MC0-3) protein is C4-dicarboxylate transport protein.